The following is a 365-amino-acid chain: Probable caffeine synthase 5 (365 aa).

Tyr-18 is an S-adenosyl-L-homocysteine binding site. Thr-25 contacts caffeine. Positions 61, 66, 98, 99, 134, and 135 each coordinate S-adenosyl-L-homocysteine. Positions 152, 155, and 156 each coordinate caffeine. Residues Asn-173, Asp-259, Phe-261, and Asn-262 each coordinate Mg(2+). Phe-317 is a caffeine binding site.

The protein belongs to the methyltransferase superfamily. Type-7 methyltransferase family. It depends on Mg(2+) as a cofactor.

It functions in the pathway alkaloid biosynthesis. Functionally, may be involved in the biosynthesis of caffeine. In Camellia sinensis (Tea plant), this protein is Probable caffeine synthase 5.